An 86-amino-acid chain; its full sequence is MAAAAATVTAVQPAASSCGKRDGDNACVVDMPRKAKKGRSPPEEEVEAFLAAAESSVARRFAAKYNYDIVKDAPMDGRYEWVRVRP.

Over residues 1 to 15 (MAAAAATVTAVQPAA) the composition is skewed to low complexity. The interval 1–23 (MAAAAATVTAVQPAASSCGKRDG) is disordered.

Belongs to the CDI family. ICK/KRP subfamily.

The sequence is that of Cyclin-dependent kinase inhibitor 6 (KRP6) from Oryza sativa subsp. japonica (Rice).